The primary structure comprises 338 residues: Ferredoxin--NADP reductase (338 aa).

Positions 32, 40, 45, 85, 120, 287, and 327 each coordinate FAD.

This sequence belongs to the ferredoxin--NADP reductase type 2 family. In terms of assembly, homodimer. FAD is required as a cofactor.

It catalyses the reaction 2 reduced [2Fe-2S]-[ferredoxin] + NADP(+) + H(+) = 2 oxidized [2Fe-2S]-[ferredoxin] + NADPH. This chain is Ferredoxin--NADP reductase, found in Wolbachia pipientis wMel.